The sequence spans 402 residues: Fugralins biosynthesis cluster protein 2 (402 aa).

Helical transmembrane passes span 28–48, 109–129, 145–165, 232–252, and 264–284; these read NCLA…CFLL, ILIF…AILV, IFWW…TAIV, VIFG…AVTV, and LAPL…IVCV. Disordered stretches follow at residues 312–335 and 378–402; these read NPNT…TGPK and TQDN…PWGV. Residues 324–334 show a composition bias toward polar residues; that stretch reads TKGSQLSSTGP. N-linked (GlcNAc...) asparagine glycosylation occurs at Asn-381.

The protein belongs to the SAT4 family.

Its subcellular location is the membrane. Its pathway is secondary metabolite biosynthesis. Its function is as follows. Part of the gene cluster that mediates the biosynthesis of the tetraketides fugralins such as linear fugralin A and cyclic fugralin B, volatile compounds that play a role in the asexual reproductive cycle but are not involved in pathogenicity. One of the key features of fugralins is the presence of a double methyl group, which is only rarely encountered in fungal secondary metabolites. As the fugralins cluster does not contain an independent methyltransferase, the PKS FGR1 is probably responsible for adding two methyl groups to the same carbon atom. Fugralin B is similar to fugralin A except for a cyclization between the carboxylic acid C-8 and the alcohol on C-4 resulting in a six membered lactone ring, probably catalyzed by the cyclase FGR4. The exact role of the individual cluster genes remains unknown and further work is needed to unravel the biosynthetic pathway. This is Fugralins biosynthesis cluster protein 2 from Gibberella zeae (strain ATCC MYA-4620 / CBS 123657 / FGSC 9075 / NRRL 31084 / PH-1) (Wheat head blight fungus).